We begin with the raw amino-acid sequence, 164 residues long: C-phycoerythrin alpha chain (164 aa).

(2R,3E)-phycoerythrobilin-binding residues include Cys82 and Cys139.

Belongs to the phycobiliprotein family. As to quaternary structure, heterodimer of an alpha and a beta chain. Contains two covalently linked bilin chromophores.

It localises to the cellular thylakoid membrane. Light-harvesting photosynthetic bile pigment-protein from the phycobiliprotein complex. The sequence is that of C-phycoerythrin alpha chain (cpeA) from Synechocystis sp. (strain PCC 6701).